We begin with the raw amino-acid sequence, 1134 residues long: MENLPFPLKLLSASSLNTPSSTPWVLDIFLTLVFALGFFFLLLPYFSYLRCDNPPSPSPKKRKRHLVSQRPAGRRGRPRGRMKNHSLRACRECPRGLEETWDLLSQLQSLLGPHLEKGDFGQLSGPDPPGEVGKRTPDGASRSSHEPTEDAAPIVSPLASPDPRTKHPQDLASTPPPGPMTTSVSSLSASQPPEPSLLLEHPSPEPPALFPHPPRTPDPLACSPPPPKGFTPPPLRDSTLLTPSHCDSVALPLDTVPQSLSPREDLAASVPGISGLGGSNSQVSALSWSQETTKTWCVFNSSVQQDHLSRQRDTTMSPLLFQAQPLSHLEPESQPFISSTPQFWPTPMAQAEAQAHLQSSFPVLSPAFLSPMKNTGVACPASQNKVQALSLPETQHPERPLLKKQLEGGLALPSRVQKSQDVFSVSTPNLPQERLTSILPENFPVSPELWRQLEQHMGQRGRIQESLDLMQLQDELPGTSQAKGKPRPWQSSTSTGESSKEAQTVKFQLERDPCPHLGQILGETPQNLSRGMESFPGKVLGATSEESERNLRKPLRSDSGSDLLRRTERNHIENILKAHMSRKLGQTNEGLIPVSVRRSWLAVNQAFPVSNTHVKTSNLAAPKSRKACVNTAQVLSFLEPCTQQVLGAHIVRFWAKHRWGLPLRVLKPIQCFQLEKVSSLSLIQLAGPSSDTCESGAGSKVEVATFLGEPPMASLRKQVLTKPSVHMPERLQASSPACKQFQRAPRGIPSSNDHGSLKAPTAGQEGRWPSKPLTYSLTGSTQQSRSLGAQSSRAGETREAVPQPTVPLGTCMRANLQATSEDVRGFKAPGASKSSLLPRMSVSQDPRKLCLMEEAVSEFEPGKATKSETQPQVSATVVLLPDGQASVVPHASENLASQVPQGHLQSMPTGNMQASQELCDLMSARRSNMGHKEPRNPNCQGSCKSQSPMFPPTHKRENSRKPNLEKHEEMFQGLRTPQLTPGRKTEDTRQNEGVQLLPSKKQPPSISHFGENIKQFFQTIFSKKERKPAPVTAESQKTVKNRSCVYGSSAEAERLMTAVGQILEENMSLCHARHASKVNQQRQQFQAPVCGFPCNHRHPFYSEHSRMLSYAASSQQATLKNQSRPNRDRQIRDQ.

A helical membrane pass occupies residues 23 to 43; that stretch reads PWVLDIFLTLVFALGFFFLLL. Disordered stretches follow at residues 54-87, 115-243, 477-504, 524-561, 727-807, 928-1007, and 1111-1134; these read PPSPSPKKRKRHLVSQRPAGRRGRPRGRMKNHSL, LEKG…LLTP, PGTSQAKGKPRPWQSSTSTGESSKEAQT, TPQNLSRGMESFPGKVLGATSEESERNLRKPLRSDSGS, MPER…PTVP, NMGH…PSIS, and AASSQQATLKNQSRPNRDRQIRDQ. Positions 59-87 are enriched in basic residues; it reads PKKRKRHLVSQRPAGRRGRPRGRMKNHSL. Residues 132-148 are compositionally biased toward basic and acidic residues; the sequence is VGKRTPDGASRSSHEPT. Residues 185-201 are compositionally biased toward low complexity; that stretch reads SSLSASQPPEPSLLLEH. Residues 204 to 235 are compositionally biased toward pro residues; it reads PEPPALFPHPPRTPDPLACSPPPPKGFTPPPL. Polar residues predominate over residues 489–504; it reads WQSSTSTGESSKEAQT. Polar residues-rich tracts occupy residues 773–794 and 937–948; these read LTYSLTGSTQQSRSLGAQSSRA and PNCQGSCKSQSP. Residues 954 to 970 show a composition bias toward basic and acidic residues; it reads HKRENSRKPNLEKHEEM. The span at 1111 to 1124 shows a compositional bias: polar residues; it reads AASSQQATLKNQSR. The span at 1125–1134 shows a compositional bias: basic and acidic residues; sequence PNRDRQIRDQ.

It belongs to the SPATA31 family.

It is found in the membrane. Its function is as follows. May play a role in spermatogenesis. In Homo sapiens (Human), this protein is Spermatogenesis-associated protein 31C2 (SPATA31C2).